The primary structure comprises 466 residues: Lipase 2 (466 aa).

The N-terminal stretch at 1–16 is a signal peptide; that stretch reads MKGLVFLLGLLPTIYA. A disulfide bridge connects residues Cys-112 and Cys-285. The active-site Charge relay system is Ser-196. Asn-231, Asn-319, and Asn-331 each carry an N-linked (GlcNAc...) asparagine glycan. Catalysis depends on charge relay system residues Asp-348 and His-381. An intrachain disulfide couples Cys-364 to Cys-409. Residues Asn-422 and Asn-451 are each glycosylated (N-linked (GlcNAc...) asparagine).

This sequence belongs to the AB hydrolase superfamily. Lipase family. Class Lip subfamily.

It localises to the secreted. The enzyme catalyses a triacylglycerol + H2O = a diacylglycerol + a fatty acid + H(+). Secreted lipase that is able to hydrolyze both the neutral triacylglycerols and the monopalmitate ester Tween 40, allowing the use of hydrolyzed products as carbon sources. Has broad lipolytic activity, which may be important for colonization and subsequent infection, therefore contributing to the persistence and virulence in human tissue. My be important for alimentary tract colonization, but not oral infection. Facilitates invasive disease via lipid-based suppression of the IL-17 response. Inhibits IL-17 production indirectly by suppressing IL-23 production by tissue-resident dendritic cells. The protein is Lipase 2 of Candida albicans (strain SC5314 / ATCC MYA-2876) (Yeast).